A 292-amino-acid chain; its full sequence is Elongation factor Ts (292 aa).

The segment at 79–82 is involved in Mg(2+) ion dislocation from EF-Tu; that stretch reads TDFV.

This sequence belongs to the EF-Ts family.

It localises to the cytoplasm. Associates with the EF-Tu.GDP complex and induces the exchange of GDP to GTP. It remains bound to the aminoacyl-tRNA.EF-Tu.GTP complex up to the GTP hydrolysis stage on the ribosome. In Staphylococcus epidermidis (strain ATCC 12228 / FDA PCI 1200), this protein is Elongation factor Ts.